Here is a 212-residue protein sequence, read N- to C-terminus: Uracil phosphoribosyltransferase (212 aa).

5-phospho-alpha-D-ribose 1-diphosphate-binding positions include arginine 78, arginine 103, and 130–138; that span reads DPMLATGGS. Uracil contacts are provided by residues isoleucine 193 and 198-200; that span reads GDA. Aspartate 199 is a binding site for 5-phospho-alpha-D-ribose 1-diphosphate.

This sequence belongs to the UPRTase family. The cofactor is Mg(2+).

The enzyme catalyses UMP + diphosphate = 5-phospho-alpha-D-ribose 1-diphosphate + uracil. The protein operates within pyrimidine metabolism; UMP biosynthesis via salvage pathway; UMP from uracil: step 1/1. With respect to regulation, allosterically activated by GTP. In terms of biological role, catalyzes the conversion of uracil and 5-phospho-alpha-D-ribose 1-diphosphate (PRPP) to UMP and diphosphate. The chain is Uracil phosphoribosyltransferase from Pseudomonas entomophila (strain L48).